A 450-amino-acid chain; its full sequence is UDP-N-acetylmuramoylalanine--D-glutamate ligase (450 aa).

ATP is bound at residue 119–125 (GSNGKTT).

It belongs to the MurCDEF family.

The protein resides in the cytoplasm. The catalysed reaction is UDP-N-acetyl-alpha-D-muramoyl-L-alanine + D-glutamate + ATP = UDP-N-acetyl-alpha-D-muramoyl-L-alanyl-D-glutamate + ADP + phosphate + H(+). It functions in the pathway cell wall biogenesis; peptidoglycan biosynthesis. In terms of biological role, cell wall formation. Catalyzes the addition of glutamate to the nucleotide precursor UDP-N-acetylmuramoyl-L-alanine (UMA). The sequence is that of UDP-N-acetylmuramoylalanine--D-glutamate ligase from Streptococcus thermophilus (strain CNRZ 1066).